We begin with the raw amino-acid sequence, 307 residues long: Exosome complex component RRP45A (307 aa).

The protein belongs to the RNase PH family. Expressed in roots, leaves, stems, buds and siliques.

Its subcellular location is the cytoplasm. The protein localises to the nucleus. Functionally, probable 3'-&gt;5' exoribonuclease involved in the regulation of cuticular wax biosynthesis. Can perform exosomal functions and partially complement the yeast rrp45 null mutant. This chain is Exosome complex component RRP45A, found in Arabidopsis thaliana (Mouse-ear cress).